The primary structure comprises 293 residues: Energy-coupling factor transporter ATP-binding protein EcfA2 (293 aa).

The ABC transporter domain maps to 3-246 (ITFQKVEHRY…ADELEKIGVD (244 aa)). 40-47 (GHTGSGKS) contributes to the ATP binding site.

Belongs to the ABC transporter superfamily. Energy-coupling factor EcfA family. Forms a stable energy-coupling factor (ECF) transporter complex composed of 2 membrane-embedded substrate-binding proteins (S component), 2 ATP-binding proteins (A component) and 2 transmembrane proteins (T component).

It localises to the cell membrane. Its function is as follows. ATP-binding (A) component of a common energy-coupling factor (ECF) ABC-transporter complex. Unlike classic ABC transporters this ECF transporter provides the energy necessary to transport a number of different substrates. In Bacillus thuringiensis (strain Al Hakam), this protein is Energy-coupling factor transporter ATP-binding protein EcfA2.